The chain runs to 136 residues: Polyadenylate-binding protein-interacting protein 2B (136 aa).

Positions asparagine 15–serine 25 are enriched in polar residues. 2 disordered regions span residues asparagine 15–lysine 40 and serine 107–tyrosine 136. Over residues lysine 27–lysine 40 the composition is skewed to basic and acidic residues.

The protein belongs to the PAIP2 family. Interacts (via central acidic portion and C-terminus) with PABPC1 (via the second and third RRM domains and the C-terminus). Post-translationally, ubiquitinated in vitro. In terms of tissue distribution, expressed at very high levels in pancreas, at high levels in testis and at moderately high levels in brain, heart and lung (at protein level).

In terms of biological role, inhibits translation of capped and polyadenylated mRNAs by displacing PABPC1 from the poly(A) tail. This is Polyadenylate-binding protein-interacting protein 2B (Paip2b) from Mus musculus (Mouse).